The sequence spans 335 residues: DNA-directed RNA polymerase subunit alpha (335 aa).

Positions 1–233 are alpha N-terminal domain (alpha-NTD); the sequence is MTAVNDFLTP…QQIAVFVDLE (233 aa). Positions 247–335 are alpha C-terminal domain (alpha-CTD); sequence IDPILLRPVD…DDDRLNAKLR (89 aa).

It belongs to the RNA polymerase alpha chain family. As to quaternary structure, homodimer. The RNAP catalytic core consists of 2 alpha, 1 beta, 1 beta' and 1 omega subunit. When a sigma factor is associated with the core the holoenzyme is formed, which can initiate transcription.

It catalyses the reaction RNA(n) + a ribonucleoside 5'-triphosphate = RNA(n+1) + diphosphate. Functionally, DNA-dependent RNA polymerase catalyzes the transcription of DNA into RNA using the four ribonucleoside triphosphates as substrates. This Alcanivorax borkumensis (strain ATCC 700651 / DSM 11573 / NCIMB 13689 / SK2) protein is DNA-directed RNA polymerase subunit alpha.